Consider the following 31-residue polypeptide: Small protein MgtS (31 aa).

Over 1–4 the chain is Periplasmic; sequence MLGN. A helical transmembrane segment spans residues 5–25; sequence MNVFMAVLGIILFSGFLAAYF. Topologically, residues 26–31 are cytoplasmic; sequence SHKWDD.

In terms of assembly, interacts with MgtA.

The protein localises to the cell inner membrane. In terms of biological role, modulates intracellular Mg(2+) levels to maintain cellular integrity upon Mg(2+) limitation. Acts by binding and stabilizing the Mg(2+) transporter MgtA, thereby leading to increased intracellular level of Mg(2+). May inhibit FtsH proteolysis of MgtA. In Escherichia coli (strain K12), this protein is Small protein MgtS.